Reading from the N-terminus, the 186-residue chain is Orotate phosphoribosyltransferase (186 aa).

Residues arginine 96, lysine 100, histidine 102, and 121 to 129 each bind 5-phospho-alpha-D-ribose 1-diphosphate; that span reads DDVATTGTS. Orotate is bound by residues threonine 125 and arginine 153.

Belongs to the purine/pyrimidine phosphoribosyltransferase family. PyrE subfamily. In terms of assembly, homodimer. It depends on Mg(2+) as a cofactor.

It catalyses the reaction orotidine 5'-phosphate + diphosphate = orotate + 5-phospho-alpha-D-ribose 1-diphosphate. It participates in pyrimidine metabolism; UMP biosynthesis via de novo pathway; UMP from orotate: step 1/2. Functionally, catalyzes the transfer of a ribosyl phosphate group from 5-phosphoribose 1-diphosphate to orotate, leading to the formation of orotidine monophosphate (OMP). The protein is Orotate phosphoribosyltransferase of Aeropyrum pernix (strain ATCC 700893 / DSM 11879 / JCM 9820 / NBRC 100138 / K1).